A 525-amino-acid chain; its full sequence is Serine/threonine-protein kinase YPK3 (525 aa).

Phosphoserine is present on residues S90 and S105. A Phosphothreonine modification is found at T107. One can recognise a Protein kinase domain in the interval 128-424; the sequence is FKPVRVLGQG…KTGANNKPTK (297 aa). ATP-binding positions include 134-142 and K157; that span reads LGQGAYGKV. The segment at 170-193 is disordered; the sequence is ATDSKREDEDKNDGNNNDNDDGLS. Over residues 172-182 the composition is skewed to basic and acidic residues; it reads DSKREDEDKND. D277 (proton acceptor) is an active-site residue. A Phosphoserine; by PKH1 or PKH2 modification is found at S321. Positions 445-524 constitute an AGC-kinase C-terminal domain; it reads RKIDWKLLES…KASGSYLEKY (80 aa). Position 490 is a phosphothreonine; by TORC1 (T490). A Phosphoserine; by TORC1 modification is found at S513.

The protein belongs to the protein kinase superfamily. AGC Ser/Thr protein kinase family. S6 kinase subfamily. In terms of processing, phosphorylated by PKA in a TORC1-dependent manner. Phosphorylation at PKA consensus sites RRxS/T decreases upon rapamycin treatment.

Its subcellular location is the cytoplasm. It carries out the reaction L-seryl-[protein] + ATP = O-phospho-L-seryl-[protein] + ADP + H(+). It catalyses the reaction L-threonyl-[protein] + ATP = O-phospho-L-threonyl-[protein] + ADP + H(+). Its function is as follows. AGC kinase which plays a role in TOR complex 1 (TORC1) signaling pathway which mediates temporal control of cell growth in response to nutrients. Required for phosphorylation of ribosomal protein S6 (RPS6A/RPS6B) at 'Ser-232' and 'Ser-233'. The protein is Serine/threonine-protein kinase YPK3 of Saccharomyces cerevisiae (strain ATCC 204508 / S288c) (Baker's yeast).